Here is a 79-residue protein sequence, read N- to C-terminus: Sulfur carrier protein TusA (79 aa).

Cysteine 17 functions as the Cysteine persulfide intermediate in the catalytic mechanism.

This sequence belongs to the sulfur carrier protein TusA family.

It is found in the cytoplasm. In terms of biological role, sulfur carrier protein which probably makes part of a sulfur-relay system. In Actinobacillus pleuropneumoniae serotype 7 (strain AP76), this protein is Sulfur carrier protein TusA.